The sequence spans 250 residues: 6-phosphogluconate dehydrogenase, decarboxylating (250 aa).

Residues Lys29 and Arg56 each coordinate substrate. Lys77 carries the N6-acetyllysine modification. Residues Arg214 and His220 each coordinate substrate. Position 245–248 (245–248 (SSSY)) interacts with NADP(+).

The protein belongs to the 6-phosphogluconate dehydrogenase family. Homodimer.

It localises to the cytoplasm. The enzyme catalyses 6-phospho-D-gluconate + NADP(+) = D-ribulose 5-phosphate + CO2 + NADPH. Its pathway is carbohydrate degradation; pentose phosphate pathway; D-ribulose 5-phosphate from D-glucose 6-phosphate (oxidative stage): step 3/3. Catalyzes the oxidative decarboxylation of 6-phosphogluconate to ribulose 5-phosphate and CO(2), with concomitant reduction of NADP to NADPH. The sequence is that of 6-phosphogluconate dehydrogenase, decarboxylating (PGD) from Sus scrofa (Pig).